A 281-amino-acid polypeptide reads, in one-letter code: MVHGNSRPLEKDVVRDLRRELSYGQYLRLDRLLDAQHPVSEPEHHDELLFIIQHQTVELWLKLILHELRTAREHLARDELKPALKQLARVKHVQHTLTEQWSVLATLTPAEYVEFRGFLGRSSGFQSYQYRAIELILGNKNAEMLEVFAHDEFAHELLNGLLKEPSVYDEFVRLLHRRGHDVPAAFLQRDVSLPHTFTPELVPLFRGIYETAAENWDAYEACEELVDLEENFQFWRFRHLKTVERTIGLKHGTGGSSGVSFLRRALELTFFPELYAVRTEI.

Residues 50 to 54, Tyr-112, and Arg-116 contribute to the substrate site; that span reads FIIQH. His-239 contributes to the heme binding site. Thr-253 is a binding site for substrate.

Belongs to the tryptophan 2,3-dioxygenase family. In terms of assembly, homotetramer. Requires heme as cofactor.

It carries out the reaction L-tryptophan + O2 = N-formyl-L-kynurenine. It functions in the pathway amino-acid degradation; L-tryptophan degradation via kynurenine pathway; L-kynurenine from L-tryptophan: step 1/2. Functionally, heme-dependent dioxygenase that catalyzes the oxidative cleavage of the L-tryptophan (L-Trp) pyrrole ring and converts L-tryptophan to N-formyl-L-kynurenine. Catalyzes the oxidative cleavage of the indole moiety. In Saccharopolyspora erythraea (strain ATCC 11635 / DSM 40517 / JCM 4748 / NBRC 13426 / NCIMB 8594 / NRRL 2338), this protein is Tryptophan 2,3-dioxygenase.